Here is a 176-residue protein sequence, read N- to C-terminus: MKFLFDLFPIILFFAAFKVWGIFTATAVAIVATLAQVAWVAFRHRKVDTMLWVSLGVIVVFGGATLVLHDEKFIQWKPTVLYWLFAIGLLAARYAFGNNLIEKMMGKQLTLPHPVWDKLNVAWALFFAVLGLANLYVVHNFTESQWVNFKLFGTTGAMVVFIILQSLWLTKYLKDE.

A run of 6 helical transmembrane segments spans residues 3–23 (FLFDLFPIILFFAAFKVWGIF), 24–44 (TATAVAIVATLAQVAWVAFRH), 49–69 (TMLWVSLGVIVVFGGATLVLH), 81–101 (LYWLFAIGLLAARYAFGNNLI), 121–141 (VAWALFFAVLGLANLYVVHNF), and 149–169 (FKLFGTTGAMVVFIILQSLWL).

Belongs to the YciB family.

The protein localises to the cell inner membrane. In terms of biological role, plays a role in cell envelope biogenesis, maintenance of cell envelope integrity and membrane homeostasis. This Burkholderia vietnamiensis (strain G4 / LMG 22486) (Burkholderia cepacia (strain R1808)) protein is Inner membrane-spanning protein YciB.